The primary structure comprises 296 residues: CRISPR-associated endonuclease Cas1 2 (296 aa).

Mn(2+)-binding residues include glutamate 157, histidine 224, and aspartate 237.

This sequence belongs to the CRISPR-associated endonuclease Cas1 family. As to quaternary structure, homodimer, forms a heterotetramer with a Cas2 homodimer. The cofactor is Mg(2+). Requires Mn(2+) as cofactor.

Its function is as follows. CRISPR (clustered regularly interspaced short palindromic repeat), is an adaptive immune system that provides protection against mobile genetic elements (viruses, transposable elements and conjugative plasmids). CRISPR clusters contain spacers, sequences complementary to antecedent mobile elements, and target invading nucleic acids. CRISPR clusters are transcribed and processed into CRISPR RNA (crRNA). Acts as a dsDNA endonuclease. Involved in the integration of spacer DNA into the CRISPR cassette. This chain is CRISPR-associated endonuclease Cas1 2, found in Chlorobaculum tepidum (strain ATCC 49652 / DSM 12025 / NBRC 103806 / TLS) (Chlorobium tepidum).